The chain runs to 507 residues: Maturase K (507 aa).

This sequence belongs to the intron maturase 2 family. MatK subfamily.

The protein resides in the plastid. It is found in the chloroplast. In terms of biological role, usually encoded in the trnK tRNA gene intron. Probably assists in splicing its own and other chloroplast group II introns. This is Maturase K from Umbellularia californica (California bay laurel).